Here is a 188-residue protein sequence, read N- to C-terminus: UPF0461 protein C5orf24 homolog (188 aa).

The residue at position 37 (Ser-37) is a Phosphoserine. Lys-75 is covalently cross-linked (Glycyl lysine isopeptide (Lys-Gly) (interchain with G-Cter in SUMO2)). Residues 79–142 (KKKKNLNRSG…GYKVSPGRPP (64 aa)) form a disordered region. Residues 80–92 (KKKNLNRSGKRGR) are compositionally biased toward basic residues. A compositionally biased stretch (polar residues) spans 94–107 (SGTTKSAGYRTSTG). A phosphoserine mark is found at Ser-121 and Ser-180. Lys-184 is covalently cross-linked (Glycyl lysine isopeptide (Lys-Gly) (interchain with G-Cter in SUMO2)).

This sequence belongs to the UPF0461 family.

This chain is UPF0461 protein C5orf24 homolog, found in Bos taurus (Bovine).